A 336-amino-acid chain; its full sequence is Heme A synthase (336 aa).

Transmembrane regions (helical) follow at residues 5 to 25 (LTRW…VGGI), 92 to 112 (GRAT…KGII), 117 to 137 (ILSY…GWYM), 153 to 173 (LAFH…KLVK), 191 to 211 (LIFS…GALV), 253 to 273 (FIHR…IISL), 284 to 304 (VAFY…ITLL), and 307 to 327 (VPII…SVVI). His-255 provides a ligand contact to heme. Heme is bound at residue His-315.

The protein belongs to the COX15/CtaA family. Type 2 subfamily. In terms of assembly, interacts with CtaB. The cofactor is heme b.

The protein localises to the cell membrane. It catalyses the reaction Fe(II)-heme o + 2 A + H2O = Fe(II)-heme a + 2 AH2. It functions in the pathway porphyrin-containing compound metabolism; heme A biosynthesis; heme A from heme O: step 1/1. In terms of biological role, catalyzes the conversion of heme O to heme A by two successive hydroxylations of the methyl group at C8. The first hydroxylation forms heme I, the second hydroxylation results in an unstable dihydroxymethyl group, which spontaneously dehydrates, resulting in the formyl group of heme A. The polypeptide is Heme A synthase (Rickettsia bellii (strain RML369-C)).